A 24-amino-acid chain; its full sequence is 12 kDa protein (24 aa).

This Mycolicibacterium smegmatis (Mycobacterium smegmatis) protein is 12 kDa protein.